Here is a 354-residue protein sequence, read N- to C-terminus: tRNase Z TRZ2, chloroplastic (354 aa).

The segment at methionine 1 to histidine 21 is disordered. The N-terminal 68 residues, methionine 1–arginine 68, are a transit peptide targeting the chloroplast.

The protein belongs to the RNase Z family. As to quaternary structure, homodimer. The cofactor is Zn(2+). Requires Ca(2+) as cofactor. It depends on Mn(2+) as a cofactor. Mg(2+) serves as cofactor. As to expression, highly expressed in green and actively dividing tissues.

It localises to the plastid. The protein resides in the chloroplast. The enzyme catalyses Endonucleolytic cleavage of RNA, removing extra 3' nucleotides from tRNA precursor, generating 3' termini of tRNAs. A 3'-hydroxy group is left at the tRNA terminus and a 5'-phosphoryl group is left at the trailer molecule.. Zinc phosphodiesterase, which displays tRNA 3'-processing endonuclease activity. Involved in tRNA maturation, by removing a 3'-trailer from precursor tRNA. In Arabidopsis thaliana (Mouse-ear cress), this protein is tRNase Z TRZ2, chloroplastic.